The sequence spans 162 residues: Corticoliberin (162 aa).

The N-terminal stretch at 1–24 (MKLNFLVTTVALLVAFPPPYECRA) is a signal peptide. Residues 25–119 (IEGSSNQPAT…ALDSVERERR (95 aa)) constitute a propeptide that is removed on maturation. Phe160 is subject to Phenylalanine amide.

The protein belongs to the sauvagine/corticotropin-releasing factor/urotensin I family.

The protein localises to the secreted. Its function is as follows. This hormone from hypothalamus regulates the release of corticotropin from pituitary gland. The chain is Corticoliberin (crh) from Carassius auratus (Goldfish).